A 173-amino-acid polypeptide reads, in one-letter code: Lectin BRA-2 (173 aa).

N-linked (GlcNAc...) asparagine glycosylation is present at Asn-39. 3 cysteine pairs are disulfide-bonded: Cys-47–Cys-61, Cys-78–Cys-168, and Cys-144–Cys-160. The C-type lectin domain occupies 51–170 (PNGWVTSENK…NDRYNFVCEI (120 aa)).

Homohexamer; disulfide-linked. In terms of tissue distribution, coelemic fluid.

Functionally, sugar-binding protein which recognizes specific carbohydrate structures and agglutinates a variety of animal cells by binding to cell-surface glycoproteins and glycolipids. Calcium-dependent lectin. Invertebrate lectins may be involved in defense functions. This is Lectin BRA-2 from Megabalanus rosa (Acorn barnacle).